Reading from the N-terminus, the 632-residue chain is Golgin subfamily A member 8O (632 aa).

The segment at 1-76 is disordered; the sequence is MAEETQHNKL…TSSATLKDLE (76 aa). The segment covering 38 to 50 has biased composition (polar residues); the sequence is TNGSIPETATSGG. Coiled coils occupy residues 85 to 150 and 209 to 421; these read VLDS…TDLY and ELEQ…SLMA. Disordered regions lie at residues 423-452, 505-524, and 552-612; these read PGEG…DPES, DAAL…DEGE, and NSAD…EHPG. Residues 427 to 440 show a composition bias toward basic and acidic residues; the sequence is HGGEHLDSEGEEAP. Gly residues predominate over residues 508–520; sequence LGGGHHQAGAQGG. Positions 569–578 are enriched in basic and acidic residues; sequence AADKHGDLRE.

It belongs to the GOLGA6 family.

The sequence is that of Golgin subfamily A member 8O (GOLGA8O) from Homo sapiens (Human).